Consider the following 75-residue polypeptide: Small ribosomal subunit protein bS18c (75 aa).

Over residues 1 to 12 (MNKSKRSFRRRL) the composition is skewed to basic residues. The segment at 1-21 (MNKSKRSFRRRLPPIGSRDQI) is disordered.

Belongs to the bacterial ribosomal protein bS18 family. Part of the 30S ribosomal subunit.

Its subcellular location is the plastid. It localises to the chloroplast. The protein is Small ribosomal subunit protein bS18c of Cycas taitungensis (Prince sago).